Consider the following 461-residue polypeptide: L-seryl-tRNA(Sec) selenium transferase (461 aa).

K294 is modified (N6-(pyridoxal phosphate)lysine).

Belongs to the SelA family. Requires pyridoxal 5'-phosphate as cofactor.

Its subcellular location is the cytoplasm. It carries out the reaction L-seryl-tRNA(Sec) + selenophosphate + H(+) = L-selenocysteinyl-tRNA(Sec) + phosphate. The protein operates within aminoacyl-tRNA biosynthesis; selenocysteinyl-tRNA(Sec) biosynthesis; selenocysteinyl-tRNA(Sec) from L-seryl-tRNA(Sec) (bacterial route): step 1/1. Its function is as follows. Converts seryl-tRNA(Sec) to selenocysteinyl-tRNA(Sec) required for selenoprotein biosynthesis. This chain is L-seryl-tRNA(Sec) selenium transferase, found in Actinobacillus pleuropneumoniae serotype 5b (strain L20).